Consider the following 156-residue polypeptide: Small ribosomal subunit protein uS7 (156 aa).

It belongs to the universal ribosomal protein uS7 family. In terms of assembly, part of the 30S ribosomal subunit. Contacts proteins S9 and S11.

In terms of biological role, one of the primary rRNA binding proteins, it binds directly to 16S rRNA where it nucleates assembly of the head domain of the 30S subunit. Is located at the subunit interface close to the decoding center, probably blocks exit of the E-site tRNA. This is Small ribosomal subunit protein uS7 from Pelagibacter ubique (strain HTCC1062).